A 72-amino-acid polypeptide reads, in one-letter code: Translation initiation factor IF-1 (72 aa).

The S1-like domain maps to M1–K72.

This sequence belongs to the IF-1 family. Component of the 30S ribosomal translation pre-initiation complex which assembles on the 30S ribosome in the order IF-2 and IF-3, IF-1 and N-formylmethionyl-tRNA(fMet); mRNA recruitment can occur at any time during PIC assembly.

It is found in the cytoplasm. Functionally, one of the essential components for the initiation of protein synthesis. Stabilizes the binding of IF-2 and IF-3 on the 30S subunit to which N-formylmethionyl-tRNA(fMet) subsequently binds. Helps modulate mRNA selection, yielding the 30S pre-initiation complex (PIC). Upon addition of the 50S ribosomal subunit IF-1, IF-2 and IF-3 are released leaving the mature 70S translation initiation complex. The sequence is that of Translation initiation factor IF-1 from Clostridium beijerinckii (strain ATCC 51743 / NCIMB 8052) (Clostridium acetobutylicum).